A 194-amino-acid chain; its full sequence is FMN-dependent NADH:quinone oxidoreductase (194 aa).

FMN is bound by residues Ser10 and 90–93; that span reads MYNL.

It belongs to the azoreductase type 1 family. Homodimer. FMN is required as a cofactor.

The catalysed reaction is 2 a quinone + NADH + H(+) = 2 a 1,4-benzosemiquinone + NAD(+). The enzyme catalyses N,N-dimethyl-1,4-phenylenediamine + anthranilate + 2 NAD(+) = 2-(4-dimethylaminophenyl)diazenylbenzoate + 2 NADH + 2 H(+). Quinone reductase that provides resistance to thiol-specific stress caused by electrophilic quinones. In terms of biological role, also exhibits azoreductase activity. Catalyzes the reductive cleavage of the azo bond in aromatic azo compounds to the corresponding amines. The sequence is that of FMN-dependent NADH:quinone oxidoreductase from Haemophilus influenzae (strain ATCC 51907 / DSM 11121 / KW20 / Rd).